The chain runs to 155 residues: Ubiquinone biosynthesis protein COQ4 homolog, mitochondrial (155 aa).

This sequence belongs to the COQ4 family. As to quaternary structure, component of a multi-subunit COQ enzyme complex. The cofactor is Zn(2+).

The protein resides in the mitochondrion inner membrane. The catalysed reaction is a 4-hydroxy-3-methoxy-5-(all-trans-polyprenyl)benzoate + H(+) = a 2-methoxy-6-(all-trans-polyprenyl)phenol + CO2. The protein operates within cofactor biosynthesis; ubiquinone biosynthesis. Its function is as follows. Lyase that catalyzes the C1-decarboxylation of 4-hydroxy-3-methoxy-5-(all-trans-polyprenyl)benzoic acid into 2-methoxy-6-(all-trans-polyprenyl)phenol during ubiquinone biosynthesis. In Cryptosporidium hominis, this protein is Ubiquinone biosynthesis protein COQ4 homolog, mitochondrial.